Consider the following 423-residue polypeptide: 26S proteasome regulatory subunit 6A homolog (423 aa).

Residue 211-218 (GPPGTGKT) participates in ATP binding.

Belongs to the AAA ATPase family.

It localises to the cytoplasm. It is found in the nucleus. The 26S proteasome is involved in the ATP-dependent degradation of ubiquitinated proteins. The regulatory (or ATPase) complex confers ATP dependency and substrate specificity to the 26S complex. The protein is 26S proteasome regulatory subunit 6A homolog (TBP1) of Solanum lycopersicum (Tomato).